A 395-amino-acid chain; its full sequence is Putative 8-amino-7-oxononanoate synthase (395 aa).

Arg-23 serves as a coordination point for substrate. 110–111 lines the pyridoxal 5'-phosphate pocket; sequence GY. Residue His-135 participates in substrate binding. Pyridoxal 5'-phosphate is bound by residues Ser-182, 207–210, and 239–242; these read DEAH and TFSK. Lys-242 bears the N6-(pyridoxal phosphate)lysine mark. Position 356 (Thr-356) interacts with substrate.

The protein belongs to the class-II pyridoxal-phosphate-dependent aminotransferase family. BioF subfamily. Homodimer. It depends on pyridoxal 5'-phosphate as a cofactor.

It catalyses the reaction 6-carboxyhexanoyl-[ACP] + L-alanine + H(+) = (8S)-8-amino-7-oxononanoate + holo-[ACP] + CO2. The protein operates within cofactor biosynthesis; biotin biosynthesis. In terms of biological role, catalyzes the decarboxylative condensation of pimeloyl-[acyl-carrier protein] and L-alanine to produce 8-amino-7-oxononanoate (AON), [acyl-carrier protein], and carbon dioxide. The chain is Putative 8-amino-7-oxononanoate synthase (bioF) from Bacillus cereus (strain ATCC 10987 / NRS 248).